Here is a 96-residue protein sequence, read N- to C-terminus: Conantokin Rl-C (96 aa).

The first 21 residues, 1–21, serve as a signal peptide directing secretion; it reads MQLYTYLYLLVPLVTFHLILG. Positions 22-78 are excised as a propeptide; the sequence is TGTLDHGDALTERRSADATALKPEPVLLQKSSARSTDDNGKDTQMKRIFKKRRNKAR. The interval 36-85 is disordered; the sequence is SADATALKPEPVLLQKSSARSTDDNGKDTQMKRIFKKRRNKARGEEELSE. Residues 56–66 are compositionally biased toward basic and acidic residues; sequence STDDNGKDTQM. Position 81 (Glu81) interacts with a divalent metal cation. 4-carboxyglutamate is present on residues Glu81, Glu82, Glu85, Glu89, and Glu93. Glu85, Glu89, and Glu93 together coordinate a divalent metal cation. Asparagine amide is present on Asn96.

Belongs to the conotoxin B superfamily. It depends on Ca(2+) as a cofactor. Mg(2+) is required as a cofactor. In terms of tissue distribution, expressed by the venom duct.

The protein resides in the secreted. Functionally, conantokins inhibit N-methyl-D-aspartate (NMDA) receptors. This toxin has antagonist activity on NR2B/GRIN2B (IC(50)=1.4 uM) and NR2A/GRIN2A (IC(50)=2.9 uM) subunits, when tested on rat receptors. The sequence is that of Conantokin Rl-C from Conus rolani (Cone snail).